Here is a 136-residue protein sequence, read N- to C-terminus: Large-conductance mechanosensitive channel (136 aa).

A run of 2 helical transmembrane segments spans residues 9 to 29 and 79 to 99; these read AFAS…GAAF and IQTV…LKAI.

Belongs to the MscL family. As to quaternary structure, homopentamer.

The protein resides in the cell inner membrane. Channel that opens in response to stretch forces in the membrane lipid bilayer. May participate in the regulation of osmotic pressure changes within the cell. This Shewanella sp. (strain MR-4) protein is Large-conductance mechanosensitive channel.